The following is a 351-amino-acid chain: MTNSIRIGTRKSPLALIHTNLVIQQIKQFFPDINCEIVPIITSGDLIQNKPLYDIGGKALFLKEIEQALLDKKIDLAVHSLKDVPGRIPEPLVIAAVLEREDPRDVFVCLKYKSIEELPQNAVIGSSAVRRKAFIQKIRPDLKVTVFRGNVDSRIKKLMTGEVDATILAYTGLKRLEVFNPEYCHLIEYSQMLPCIGQGVIAVEIRKDDNAMLEICNQINHLPTFELIKPERAFLEYLDANCRTPIAAYSQYLDANPRHLSKLAYREVFEGNTEALATAAYKSNRTDASTGLTYKLPLEVEFGKMSNIQTNFMLGNLDGSKITFHTETTNIKTSTEAGIKAAKMMLEAICK.

Residue C242 is modified to S-(dipyrrolylmethanemethyl)cysteine.

It belongs to the HMBS family. In terms of assembly, monomer. Requires dipyrromethane as cofactor.

The enzyme catalyses 4 porphobilinogen + H2O = hydroxymethylbilane + 4 NH4(+). The protein operates within porphyrin-containing compound metabolism; protoporphyrin-IX biosynthesis; coproporphyrinogen-III from 5-aminolevulinate: step 2/4. In terms of biological role, tetrapolymerization of the monopyrrole PBG into the hydroxymethylbilane pre-uroporphyrinogen in several discrete steps. This is Porphobilinogen deaminase from Rickettsia rickettsii (strain Sheila Smith).